A 211-amino-acid chain; its full sequence is Transcriptional regulatory protein LiaR (211 aa).

In terms of domain architecture, Response regulatory spans 3–119 (RVLLIDDHEM…EIADAIRAAS (117 aa)). At Asp-54 the chain carries 4-aspartylphosphate. Positions 143 to 208 (NALPHESLTK…QAAVYAHRNH (66 aa)) constitute an HTH luxR-type domain. Positions 167–186 (NKEIGEELFITIKTVKTHIT) form a DNA-binding region, H-T-H motif.

Phosphorylated by LiaS.

The protein resides in the cytoplasm. Member of the two-component regulatory system LiaS/LiaR probably involved in response to a subset of cell wall-active antibiotics that interfere with the lipid II cycle in the cytoplasmic membrane (bacitracin, nisin, ramoplanin and vancomycin). Also seems to be involved in response to cationic antimicrobial peptides and secretion stress. LiaR regulates the transcription of the liaIHGFSR operon. The protein is Transcriptional regulatory protein LiaR (liaR) of Bacillus subtilis (strain 168).